The chain runs to 399 residues: Tyrosine--tRNA ligase 2 (399 aa).

Residues 41–50 (PTAPDLHLGH) carry the 'HIGH' region motif. The 'KMSKS' region signature appears at 225-229 (KMSKS). K228 contacts ATP. Residues 336–398 (ILIANLLKEA…GKRKFANITV (63 aa)) form the S4 RNA-binding domain.

The protein belongs to the class-I aminoacyl-tRNA synthetase family. TyrS type 2 subfamily. Homodimer.

It is found in the cytoplasm. It carries out the reaction tRNA(Tyr) + L-tyrosine + ATP = L-tyrosyl-tRNA(Tyr) + AMP + diphosphate + H(+). Its function is as follows. Catalyzes the attachment of tyrosine to tRNA(Tyr) in a two-step reaction: tyrosine is first activated by ATP to form Tyr-AMP and then transferred to the acceptor end of tRNA(Tyr). The sequence is that of Tyrosine--tRNA ligase 2 from Pseudoalteromonas translucida (strain TAC 125).